A 505-amino-acid polypeptide reads, in one-letter code: Glutamate--tRNA ligase (505 aa).

The 'HIGH' region motif lies at 12–22 (PSPTGALHIGG). Residues 260–264 (KLSKR) carry the 'KMSKS' region motif. Position 263 (K263) interacts with ATP.

It belongs to the class-I aminoacyl-tRNA synthetase family. Glutamate--tRNA ligase type 1 subfamily. Monomer.

It localises to the cytoplasm. It catalyses the reaction tRNA(Glu) + L-glutamate + ATP = L-glutamyl-tRNA(Glu) + AMP + diphosphate. Catalyzes the attachment of glutamate to tRNA(Glu) in a two-step reaction: glutamate is first activated by ATP to form Glu-AMP and then transferred to the acceptor end of tRNA(Glu). In Parabacteroides distasonis (strain ATCC 8503 / DSM 20701 / CIP 104284 / JCM 5825 / NCTC 11152), this protein is Glutamate--tRNA ligase.